A 136-amino-acid chain; its full sequence is MRHRIKGRRLNVTSSHRQSMLANMAVSLVIHEQIKTTLPKAKELRPYIEALITKAKKPDLAVRRSVLSKIKDKRAVEKIINILGVRYKDRPGGYTRIVKSGFRYGDLAPIAYIEFVDRDINAKGNVHQDANEEIKN.

The protein belongs to the bacterial ribosomal protein bL17 family. In terms of assembly, part of the 50S ribosomal subunit. Contacts protein L32.

The polypeptide is Large ribosomal subunit protein bL17 (Rickettsia prowazekii (strain Madrid E)).